The chain runs to 119 residues: Large ribosomal subunit protein bL20c (119 aa).

Belongs to the bacterial ribosomal protein bL20 family.

It localises to the plastid. It is found in the chloroplast. Functionally, binds directly to 23S ribosomal RNA and is necessary for the in vitro assembly process of the 50S ribosomal subunit. It is not involved in the protein synthesizing functions of that subunit. This Triticum aestivum (Wheat) protein is Large ribosomal subunit protein bL20c.